Consider the following 332-residue polypeptide: Lipoyl synthase (332 aa).

[4Fe-4S] cluster-binding residues include Cys74, Cys79, Cys85, Cys100, Cys104, Cys107, and Ser314. In terms of domain architecture, Radical SAM core spans 85–303 (CFGKGTATFM…EEKAYEMGFS (219 aa)).

The protein belongs to the radical SAM superfamily. Lipoyl synthase family. The cofactor is [4Fe-4S] cluster.

Its subcellular location is the cytoplasm. It catalyses the reaction [[Fe-S] cluster scaffold protein carrying a second [4Fe-4S](2+) cluster] + N(6)-octanoyl-L-lysyl-[protein] + 2 oxidized [2Fe-2S]-[ferredoxin] + 2 S-adenosyl-L-methionine + 4 H(+) = [[Fe-S] cluster scaffold protein] + N(6)-[(R)-dihydrolipoyl]-L-lysyl-[protein] + 4 Fe(3+) + 2 hydrogen sulfide + 2 5'-deoxyadenosine + 2 L-methionine + 2 reduced [2Fe-2S]-[ferredoxin]. It participates in protein modification; protein lipoylation via endogenous pathway; protein N(6)-(lipoyl)lysine from octanoyl-[acyl-carrier-protein]: step 2/2. Functionally, catalyzes the radical-mediated insertion of two sulfur atoms into the C-6 and C-8 positions of the octanoyl moiety bound to the lipoyl domains of lipoate-dependent enzymes, thereby converting the octanoylated domains into lipoylated derivatives. The chain is Lipoyl synthase from Polaromonas naphthalenivorans (strain CJ2).